An 843-amino-acid chain; its full sequence is MVGVTSCEEEILEYGRGYSEDVDTIREREYPQLKDTTYLDHAGTTLYAKSLIESFSRELTSNLFGNPHSLSTSSQLSTQRVDDVRLRALRFFKADPEEFDLVFVANATAAIKLVADGMRDSTRQGFWYGYHVDAHTSLVGVRELAEKGGRCFTSDDEVEDWISRLCDVRSESLKLFAYPAQSNMNGRRLPFSWCKKIRDQGETTGGNVYTLLDAASLVSTSPLDLSDASAAPDFTVLSFYKIFGFPDLGALIVRKSAGQIFEHRRYFGGGTVDMVLTRGLQWHAKKQSSIHDRLEDGTLPFHNIIALDSAFATHERLFGSMQNISSHTRFLAKRLYDRLNALRHFNGQRVCELYKSPRSDYNQPSTQGPIIAFNLRNSQGSWIGKSEVERLAATKNIQIRSGSLCNPGGTSGSLGWTGADLLQQFSAGLRCGDDHDVMDGRPTGVLRLSLGPMTNLEDINTFVELVEEFYVEKAATVDSLVAPVHSVPLQQPRFYIESLSLYPIKSCGPFKVPDGRRWEIRREGLAWDREWCLIHQGTGAALNQKKYPRMALIRPSIDLDRNVLRVTCGEPGSTDQKLLEVSLLRENTELATTSLCQRTSKASTVCGDQVTVQAYTSPPVAQFFSDFLGVPCTLARFPPHSSTRYASPRKAPGAWKQYLRKFVMPGSFPQDPSPPPAEKHPILLSNESPILLISRSSVNYLNENIKANQKKIRTGTSKAVAADVFRANIVVAESLADSPKMEQPYIEDQWEALKIGPGELRFDVLGSCQRCSMVCIDQFTGVRRDEPFSTLAKTRKINNKIVFGRHCSLSASEVTQDQHDNAERWTLMVGDIVIPSYAHDYTL.

At Lys-241 the chain carries N6-(pyridoxal phosphate)lysine. Cys-405 is a catalytic residue. Residues 657–836 (QYLRKFVMPG…LMVGDIVIPS (180 aa)) enclose the MOSC domain.

It belongs to the class-V pyridoxal-phosphate-dependent aminotransferase family. MOCOS subfamily. Requires pyridoxal 5'-phosphate as cofactor.

It catalyses the reaction Mo-molybdopterin + L-cysteine + AH2 = thio-Mo-molybdopterin + L-alanine + A + H2O. Its function is as follows. Sulfurates the molybdenum cofactor. Sulfation of molybdenum is essential for xanthine dehydrogenase (XDH) and aldehyde oxidase (ADO) enzymes in which molybdenum cofactor is liganded by 1 oxygen and 1 sulfur atom in active form. The protein is Molybdenum cofactor sulfurase of Aspergillus fumigatus (strain CBS 144.89 / FGSC A1163 / CEA10) (Neosartorya fumigata).